The following is a 30-amino-acid chain: Dermaseptin-3.4TR (30 aa).

As to expression, expressed by the skin glands.

It is found in the secreted. In terms of biological role, has antimicrobial activity. The chain is Dermaseptin-3.4TR from Phyllomedusa trinitatis (Trinidad leaf frog).